Reading from the N-terminus, the 513-residue chain is Ribonuclease Y (513 aa).

The helical transmembrane segment at 6–26 (YIIIAVVIIIICVILGLYIVD) threads the bilayer. In terms of domain architecture, KH spans 203–288 (TVHVVNLPND…EMVEKAKKEV (86 aa)). In terms of domain architecture, HD spans 329–422 (VLKHSIEVSH…VQAADAISAA (94 aa)).

It belongs to the RNase Y family.

It localises to the cell membrane. Endoribonuclease that initiates mRNA decay. The protein is Ribonuclease Y of Clostridium botulinum (strain ATCC 19397 / Type A).